A 284-amino-acid chain; its full sequence is RNA polymerase sigma factor RpoH (284 aa).

Positions 53 to 122 are sigma-70 factor domain-2; that stretch reads LILSHLRFVI…IHEYVLRNWR (70 aa). An Interaction with polymerase core subunit RpoC motif is present at residues 77–80; sequence DLIQ. A sigma-70 factor domain-4 region spans residues 228-280; it reads ALLRLDERSRHIIHARWLDKNKKNTLQNIANNYGISAERVRQLEKNAMKKLKL. Residues 253–272 constitute a DNA-binding region (H-T-H motif); that stretch reads LQNIANNYGISAERVRQLEK.

This sequence belongs to the sigma-70 factor family. RpoH subfamily. Interacts with the RNA polymerase core enzyme.

The protein resides in the cytoplasm. Its function is as follows. Sigma factors are initiation factors that promote the attachment of RNA polymerase to specific initiation sites and are then released. This sigma factor is involved in regulation of expression of heat shock genes. In Buchnera aphidicola subsp. Acyrthosiphon pisum (strain APS) (Acyrthosiphon pisum symbiotic bacterium), this protein is RNA polymerase sigma factor RpoH.